Reading from the N-terminus, the 284-residue chain is Ermin (284 aa).

The segment at 1-61 (MTDVPATFTQ…APTKGSQEER (61 aa)) is disordered. Ser73 is modified (phosphoserine). Residues 108–251 (TFREGRQWEK…PTLGKKSDIS (144 aa)) are disordered. 2 stretches are compositionally biased toward basic and acidic residues: residues 126 to 140 (EIRR…QPLK) and 171 to 183 (LHSK…KVWD). A compositionally biased stretch (acidic residues) spans 184–200 (EEIDDDDDDNCNDDEDE). Over residues 201–220 (VRVIEFKKKHEEVSQFKEEG) the composition is skewed to basic and acidic residues. Phosphoserine is present on residues Ser214, Ser226, Ser230, and Ser233. A compositionally biased stretch (low complexity) spans 225–235 (DSPLSSASSQA). Thr237 is modified (phosphothreonine). The segment at 265-284 (KIRKGNTKQRIDEFESMMHL) is binds actin.

As to quaternary structure, binds actin.

It localises to the cytoplasm. Its subcellular location is the cytoskeleton. Functionally, plays a role in cytoskeletal rearrangements during the late wrapping and/or compaction phases of myelinogenesis as well as in maintenance and stability of myelin sheath in the adult. May play an important role in late-stage oligodendroglia maturation, myelin/Ranvier node formation during CNS development, and in the maintenance and plasticity of related structures in the mature CNS. The polypeptide is Ermin (ERMN) (Pongo abelii (Sumatran orangutan)).